We begin with the raw amino-acid sequence, 392 residues long: Phospho-N-acetylmuramoyl-pentapeptide-transferase (392 aa).

A run of 10 helical transmembrane segments spans residues 24-44 (YLTF…LLAG), 76-96 (TMGG…WFDL), 100-120 (FVWV…VDDW), 137-157 (YFWQ…CISE), 193-213 (VSYP…IVGS), 225-245 (GLAI…AYVT), 262-282 (AGEL…FLWF), 289-309 (VFMG…IAII), 314-334 (IVLA…MLQV), and 369-389 (QVVV…LTTL).

Belongs to the glycosyltransferase 4 family. MraY subfamily. Requires Mg(2+) as cofactor.

It is found in the cell inner membrane. It catalyses the reaction UDP-N-acetyl-alpha-D-muramoyl-L-alanyl-gamma-D-glutamyl-meso-2,6-diaminopimeloyl-D-alanyl-D-alanine + di-trans,octa-cis-undecaprenyl phosphate = di-trans,octa-cis-undecaprenyl diphospho-N-acetyl-alpha-D-muramoyl-L-alanyl-D-glutamyl-meso-2,6-diaminopimeloyl-D-alanyl-D-alanine + UMP. The protein operates within cell wall biogenesis; peptidoglycan biosynthesis. In terms of biological role, catalyzes the initial step of the lipid cycle reactions in the biosynthesis of the cell wall peptidoglycan: transfers peptidoglycan precursor phospho-MurNAc-pentapeptide from UDP-MurNAc-pentapeptide onto the lipid carrier undecaprenyl phosphate, yielding undecaprenyl-pyrophosphoryl-MurNAc-pentapeptide, known as lipid I. The polypeptide is Phospho-N-acetylmuramoyl-pentapeptide-transferase (Paracidovorax citrulli (strain AAC00-1) (Acidovorax citrulli)).